Consider the following 309-residue polypeptide: Glutaminase (309 aa).

Positions 65, 117, 162, 169, 193, 245, and 263 each coordinate substrate.

It belongs to the glutaminase family. Homotetramer.

The enzyme catalyses L-glutamine + H2O = L-glutamate + NH4(+). This chain is Glutaminase, found in Bacillus cereus (strain ATCC 10987 / NRS 248).